The primary structure comprises 339 residues: uncharacterized protein (339 aa).

The first 29 residues, 1–29, serve as a signal peptide directing secretion; that stretch reads MIKQVCKNITICSLALSTALTVFPASSYA.

This sequence belongs to the aerolysin family.

This is an uncharacterized protein from Staphylococcus aureus (strain MRSA252).